The chain runs to 267 residues: Tryptophan synthase alpha chain (267 aa).

Residues E47 and D58 each act as proton acceptor in the active site.

It belongs to the TrpA family. In terms of assembly, tetramer of two alpha and two beta chains.

The enzyme catalyses (1S,2R)-1-C-(indol-3-yl)glycerol 3-phosphate + L-serine = D-glyceraldehyde 3-phosphate + L-tryptophan + H2O. Its pathway is amino-acid biosynthesis; L-tryptophan biosynthesis; L-tryptophan from chorismate: step 5/5. In terms of biological role, the alpha subunit is responsible for the aldol cleavage of indoleglycerol phosphate to indole and glyceraldehyde 3-phosphate. This chain is Tryptophan synthase alpha chain, found in Prosthecochloris aestuarii (strain DSM 271 / SK 413).